We begin with the raw amino-acid sequence, 569 residues long: Sulfite reductase [NADPH] hemoprotein beta-component (569 aa).

[4Fe-4S] cluster-binding residues include C433, C439, C478, and C482. C482 contacts siroheme.

The protein belongs to the nitrite and sulfite reductase 4Fe-4S domain family. In terms of assembly, alpha(8)-beta(8). The alpha component is a flavoprotein, the beta component is a hemoprotein. Siroheme serves as cofactor. The cofactor is [4Fe-4S] cluster.

It catalyses the reaction hydrogen sulfide + 3 NADP(+) + 3 H2O = sulfite + 3 NADPH + 4 H(+). The protein operates within sulfur metabolism; hydrogen sulfide biosynthesis; hydrogen sulfide from sulfite (NADPH route): step 1/1. Its function is as follows. Component of the sulfite reductase complex that catalyzes the 6-electron reduction of sulfite to sulfide. This is one of several activities required for the biosynthesis of L-cysteine from sulfate. The chain is Sulfite reductase [NADPH] hemoprotein beta-component from Shewanella sediminis (strain HAW-EB3).